The chain runs to 344 residues: MLQALLDSKDFLALTLAHPEQFDGEFSFNLGDHTQVEVWDTGVIVFEPIQNEGKDIVLSCGVHGNETAPIELCNSLIKQLLQQKIIAKQRTLFLIGNPLAINNGTRIIDENMNRLFSGEHSNPPGLVNPERVRAKKLEAYVDRFYTTVADGRQRIHYDLHTAMRASKHEKFAIYPYRPGRAFSGEQIMFLAASGVDTVLFHHEPTTTFSYFSSERYGADAFTIELGKVYPMGQNDMTRFIATHEMFMRLITAKPLELDAFDADKVNLYQVCRVINKHFDDFEFTFATDVENFRSFPKGFVLAREGGKEIKVEHEFESVVFPNAKVPIGNRTVICLIPAVNADVR.

Zn(2+)-binding residues include His63, Glu66, and His160. Glu224 is an active-site residue.

Belongs to the AspA/AstE family. Succinylglutamate desuccinylase subfamily. It depends on Zn(2+) as a cofactor.

The enzyme catalyses N-succinyl-L-glutamate + H2O = L-glutamate + succinate. It functions in the pathway amino-acid degradation; L-arginine degradation via AST pathway; L-glutamate and succinate from L-arginine: step 5/5. Transforms N(2)-succinylglutamate into succinate and glutamate. This chain is Succinylglutamate desuccinylase, found in Shewanella sp. (strain W3-18-1).